We begin with the raw amino-acid sequence, 176 residues long: MELVVGRVVKSHGVTGEVVVEIRTDDPADRFAPGTRLRAKGPFDGGAEGSAVSYVIESVRQHGGRLLVRLAGVADRDAADALRGSLFVIDADDLPPIDEPDTYYDHQLVGLMVQTATGEGVGVVTEVVHTAAGELLAVKRDSDEVLVPFVRAIVTSVSLDDGIVEIDPPHGLLNLE.

Positions 100–172 (PDTYYDHQLV…IVEIDPPHGL (73 aa)) constitute a PRC barrel domain.

Belongs to the RimM family. In terms of assembly, binds ribosomal protein uS19.

It localises to the cytoplasm. An accessory protein needed during the final step in the assembly of 30S ribosomal subunit, possibly for assembly of the head region. Essential for efficient processing of 16S rRNA. May be needed both before and after RbfA during the maturation of 16S rRNA. It has affinity for free ribosomal 30S subunits but not for 70S ribosomes. This Mycobacterium bovis (strain ATCC BAA-935 / AF2122/97) protein is Ribosome maturation factor RimM.